Here is a 321-residue protein sequence, read N- to C-terminus: Cytochrome c biogenesis protein CcsA (321 aa).

A run of 8 helical transmembrane segments spans residues Val-17–Leu-37, Thr-48–Ile-68, Leu-71–Phe-91, Leu-98–Leu-118, Met-143–Ile-163, Ile-225–Asn-245, Thr-259–His-273, and Ala-286–Leu-306.

It belongs to the CcmF/CycK/Ccl1/NrfE/CcsA family. As to quaternary structure, may interact with Ccs1.

It is found in the plastid. Its subcellular location is the chloroplast thylakoid membrane. Functionally, required during biogenesis of c-type cytochromes (cytochrome c6 and cytochrome f) at the step of heme attachment. The polypeptide is Cytochrome c biogenesis protein CcsA (Populus alba (White poplar)).